Here is a 408-residue protein sequence, read N- to C-terminus: Potassium channel subfamily K member 13 (408 aa).

At 1–19 (MAGRGFSWGPGHLNEDNAR) the chain is on the cytoplasmic side. Residues 20-40 (FLLLAALIVLYLLGGAAVFSA) traverse the membrane as a helical segment. N-linked (GlcNAc...) asparagine glycans are attached at residues Asn-59 and Asn-65. The pore-forming intramembrane region spans 95–115 (WDFTGAFYFVGTVVSTIGFGM). Residues Thr-110, Ile-111, and Gly-112 each contribute to the K(+) site. Residues 110–115 (TIGFGM) are selectivity filter 1. A helical transmembrane segment spans residues 125-145 (IFLIFYGLVGCSSTILFFNLF). The Cytoplasmic segment spans residues 146 to 193 (LERLITIIAYIMKSCHQRQLRRRGALPQESLKDAGQCEVDSLAGWKPS). The chain crosses the membrane as a helical span at residues 194 to 214 (VYYVMLILCTASILISCCASA). An intramembrane region (pore-forming) is located at residues 224-244 (YFDSLYFCFVAFSTIGFGDLV). The K(+) site is built by Thr-237, Ile-238, Gly-239, and Phe-240. Positions 237–242 (TIGFGD) are selectivity filter 2. Residues 263–283 (VFILMGVCCIYSLFNVISILI) traverse the membrane as a helical segment. Over 284-408 (KQSLNWILRK…NRLAETSGDR (125 aa)) the chain is Cytoplasmic.

This sequence belongs to the two pore domain potassium channel (TC 1.A.1.8) family. Homodimer. Heterodimer with KCNK12. In terms of tissue distribution, expressed in microglia (at protein level).

It is found in the cell membrane. The enzyme catalyses K(+)(in) = K(+)(out). The channel conductance is activated by arachidonic acid and inhibited by Ba(2+) ions, volatile anesthetics such as halothane and antiarrhythmic drugs mexiletine and lidocaine. Insensitive to extracellular pH change. K(+) channel that conducts outward rectifying tonic currents potentiated by purinergic signals. Homo- and heterodimerizes to form functional channels with distinct regulatory and gating properties. Contributes most of K(+) currents at the plasma membrane of resting microglia. Maintains a depolarized membrane potential required for proper ramified microglia morphology and phagocytosis, selectively mediating microglial pruning of presynaptic compartments at hippocampal excitatory synapses. Upon local release of ATP caused by neuronal injury or infection, it is potentiated by P2RY12 and P2RX7 receptor signaling and contributes to ATP-triggered K(+) efflux underlying microglial NLRP3 inflammasome assembly and IL1B release. The chain is Potassium channel subfamily K member 13 from Homo sapiens (Human).